A 443-amino-acid chain; its full sequence is KH domain-containing, RNA-binding, signal transduction-associated protein 1 (443 aa).

Residues 1–94 (MQRRDDPASR…PLLPPSATAA (94 aa)) form a disordered region. Serine 18 and serine 20 each carry phosphoserine. The residue at position 21 (lysine 21) is an N6-acetyllysine. At serine 29 the chain carries Phosphoserine. Threonine 33 is modified (phosphothreonine). Arginine 45 and arginine 52 each carry asymmetric dimethylarginine; by PRMT1. At serine 58 the chain carries Phosphoserine; by MAPK1. Residues 61-72 (TQPPPLLPPSTP) are compositionally biased toward pro residues. Threonine 71 and threonine 84 each carry phosphothreonine; by MAPK1. The segment covering 81–94 (SAPTPLLPPSATAA) has biased composition (low complexity). Glycyl lysine isopeptide (Lys-Gly) (interchain with G-Cter in SUMO2) cross-links involve residues lysine 96 and lysine 102. Residues 100-260 (ENKYLPELMA…VKKFLVPDMM (161 aa)) form an involved in homodimerization region. Serine 113 is modified (phosphoserine). Lysine 139 participates in a covalent cross-link: Glycyl lysine isopeptide (Lys-Gly) (interchain with G-Cter in SUMO2). Serine 150 bears the Phosphoserine mark. A KH domain is found at 171-197 (NFVGKILGPQGNTIKRLQEETGAKISV). Lysine 175 carries the N6-acetyllysine; alternate modification. Lysine 175 is covalently cross-linked (Glycyl lysine isopeptide (Lys-Gly) (interchain with G-Cter in SUMO2); alternate). Threonine 183 carries the phosphothreonine modification. Residues 280-317 (PSRGRGVSVRGRGAAPPPPPVPRGRGVGPPRGALVRGT) form a disordered region. Residues arginine 282, arginine 284, and arginine 291 each carry the omega-N-methylarginine modification. The segment covering 283 to 293 (GRGVSVRGRGA) has biased composition (low complexity). Arginine 304 bears the Asymmetric dimethylarginine mark. Low complexity predominate over residues 307 to 316 (GPPRGALVRG). 2 positions are modified to omega-N-methylarginine; by PRMT1: arginine 310 and arginine 315. Arginine 320 carries the dimethylated arginine; alternate modification. Arginine 320 carries the post-translational modification Omega-N-methylarginine; by PRMT1; alternate. At arginine 325 the chain carries Omega-N-methylarginine; by PRMT1. The segment at 326–345 (GATVTRGVPPPPTVRGAPTP) is disordered. 2 positions are modified to dimethylated arginine; alternate: arginine 331 and arginine 340. 2 positions are modified to omega-N-methylarginine; by PRMT1; alternate: arginine 331 and arginine 340. Arginine 331 carries the post-translational modification Asymmetric dimethylarginine; alternate. The segment at 351–443 (GIQRIPLPPT…AYREHPYGRY (93 aa)) is interaction with HNRNPA1. Position 387 is a phosphotyrosine (tyrosine 387). Serine 390 carries the phosphoserine modification. Residues 400–420 (GHGELQDSYEAYGQDDWNGTR) are interaction with ZBTB7A. The disordered stretch occupies residues 411–443 (YGQDDWNGTRPSLKAPPARPVKGAYREHPYGRY). A Glycyl lysine isopeptide (Lys-Gly) (interchain with G-Cter in SUMO2) cross-link involves residue lysine 432. Residues 434–443 (AYREHPYGRY) show a composition bias toward basic and acidic residues. A phosphotyrosine; by PTK6 mark is found at tyrosine 435, tyrosine 440, and tyrosine 443.

This sequence belongs to the KHDRBS family. In terms of assembly, self-associates to form homooligomers when bound to RNA, oligomerization appears to be limited when binding to proteins. Forms a trimeric complex in the nucleus consisting of BANP, HDAC6 and KHDRBS1/SAM68; HDAC6 keeps KHDRBS1 in a deacetylated state which inhibits the inclusion of CD44 alternate exons. The complex is disrupted by MAPK1/MAPK3-mediated phosphorylation of BANP which results in BANP export to the cytoplasm. This facilitates acetylation of KHDRBS1 and CD44 variant exon inclusion. Interacts with KHDRBS3/SLIM-2 and KHDRBS2/SLIM-1; heterooligomer formation of KHDRBS family proteins may modulate RNA substrate specificity. Interacts with RASA1, FYN, GRB2, PLCG1, SRC, CBP and PRMT1. Interacts with PTK6 (via SH3 and SH2 domains). Forms a complex with ILF2, ILF3, YLPM1, RBMX, NCOA5 and PPP1CA. Binds WBP4/FBP21 (via WW domains), FNBP4/FBP30 (via WW domains). Interacts (via Arg/Gly-rich-flanked Pro-rich regions) with FYN (via the SH3 domain). Interacts with APC, HNRNPA1. Interacts with the non-receptor tyrosine kinase SRMS; the interaction leads to phosphorylation of KHDRBS1. Interacts with ZBTB7A; negatively regulates KHDRBS1 splicing activity toward BCL2L1. Post-translationally, tyrosine phosphorylated by several non-receptor tyrosine kinases including LCK, FYN and JAK3. Also tyrosine phosphorylated by the non-receptor tyrosine kinase SRMS in an EGF-dependent manner. Phosphorylation by PTK6 negatively regulates its RNA binding ability. Phosphorylation by PTK6 at Tyr-440 dictates the nuclear localization of KHDRBS1. Phosphorylation by MAPK1 at Ser-58, Thr-71 and Thr-84 regulates CD44 alternative splicing by promoting CD44 exon v5 inclusion. Acetylated. Positively correlates with ability to bind RNA. Deacetylated by HDAC6; this regulates alternative splicing by inhibiting the inclusion of CD44 alternate exons. In terms of processing, arginine methylation is required for nuclear localization. Inhibits interaction with Src-like SH3 domains, but not interaction with WW domains of WBP4/FBP21 and FNBP4/FBP30. As to expression, in adult cerebellum expressed in most neuronal cell populations, specifically in cerebellar granule cells of the internal granular layer, ROR(alpha)-positive Purkinje cells, internal granular layer and molecular layer interneurons (at protein level).

The protein localises to the nucleus. It localises to the cytoplasm. The protein resides in the membrane. Functionally, recruited and tyrosine phosphorylated by several receptor systems, for example the T-cell, leptin and insulin receptors. Once phosphorylated, functions as an adapter protein in signal transduction cascades by binding to SH2 and SH3 domain-containing proteins. Role in G2-M progression in the cell cycle. Represses CBP-dependent transcriptional activation apparently by competing with other nuclear factors for binding to CBP. Also acts as a putative regulator of mRNA stability and/or translation rates and mediates mRNA nuclear export. Positively regulates the association of constitutive transport element (CTE)-containing mRNA with large polyribosomes and translation initiation. May not be involved in the nucleocytoplasmic export of unspliced (CTE)-containing RNA species. RNA-binding protein that plays a role in the regulation of alternative splicing and influences mRNA splice site selection and exon inclusion. Binds to RNA containing 5'-[AU]UAA-3' as a bipartite motif spaced by more than 15 nucleotides. Binds poly(A). In cooperation with HNRNPA1 modulates alternative splicing of BCL2L1 by promoting splicing toward isoform Bcl-X(S), and of SMN1. Can regulate CD44 alternative splicing in a Ras pathway-dependent manner. Can regulate alternative splicing of NRXN1 and NRXN3 in the laminin G-like domain 6 containing the evolutionary conserved neurexin alternative spliced segment 4 (AS4) involved in neurexin selective targeting to postsynaptic partners. In a neuronal activity-dependent manner cooperates synergistically with KHDRBS2/SLIM-1 in regulation of NRXN1 exon skipping at AS4. The cooperation with KHDRBS2/SLIM-1 is antagonistic for regulation of NXRN3 alternative splicing at AS4. The chain is KH domain-containing, RNA-binding, signal transduction-associated protein 1 from Mus musculus (Mouse).